The primary structure comprises 379 residues: Anhydro-N-acetylmuramic acid kinase (379 aa).

An ATP-binding site is contributed by 9-16; it reads GTSADGVD.

Belongs to the anhydro-N-acetylmuramic acid kinase family.

It catalyses the reaction 1,6-anhydro-N-acetyl-beta-muramate + ATP + H2O = N-acetyl-D-muramate 6-phosphate + ADP + H(+). It functions in the pathway amino-sugar metabolism; 1,6-anhydro-N-acetylmuramate degradation. The protein operates within cell wall biogenesis; peptidoglycan recycling. In terms of biological role, catalyzes the specific phosphorylation of 1,6-anhydro-N-acetylmuramic acid (anhMurNAc) with the simultaneous cleavage of the 1,6-anhydro ring, generating MurNAc-6-P. Is required for the utilization of anhMurNAc either imported from the medium or derived from its own cell wall murein, and thus plays a role in cell wall recycling. The sequence is that of Anhydro-N-acetylmuramic acid kinase from Synechococcus sp. (strain CC9605).